Consider the following 253-residue polypeptide: N-acetylglucosaminyl-phosphatidylinositol de-N-acetylase (253 aa).

Residues 3–23 (VAAPLLCLAAAVLVWGVLWVW) form a helical membrane-spanning segment. At 24–253 (GSWERMTRPE…YMRINSLNFL (230 aa)) the chain is on the cytoplasmic side.

It belongs to the PIGL family.

It localises to the endoplasmic reticulum membrane. The enzyme catalyses a 6-(N-acetyl-alpha-D-glucosaminyl)-1-(1,2-diacyl-sn-glycero-3-phospho)-1D-myo-inositol + H2O = a 6-(alpha-D-glucosaminyl)-1-(1,2-diacyl-sn-glycero-3-phospho)-1D-myo-inositol + acetate. Its pathway is glycolipid biosynthesis; glycosylphosphatidylinositol-anchor biosynthesis. Functionally, catalyzes the second step of glycosylphosphatidylinositol (GPI) biosynthesis, which is the de-N-acetylation of N-acetylglucosaminyl-phosphatidylinositol. In Bos taurus (Bovine), this protein is N-acetylglucosaminyl-phosphatidylinositol de-N-acetylase (PIGL).